The primary structure comprises 258 residues: Small ribosomal subunit protein uS2 (258 aa).

The tract at residues 227-258 (GEQFAPASEQKEEVKTQEVQEVEDSNDDVIDD) is disordered. The segment covering 235-244 (EQKEEVKTQE) has biased composition (basic and acidic residues). A compositionally biased stretch (acidic residues) spans 246–258 (QEVEDSNDDVIDD).

The protein belongs to the universal ribosomal protein uS2 family.

The chain is Small ribosomal subunit protein uS2 from Caldicellulosiruptor saccharolyticus (strain ATCC 43494 / DSM 8903 / Tp8T 6331).